A 263-amino-acid chain; its full sequence is Izumo sperm-egg fusion protein 3 (263 aa).

The N-terminal stretch at 1–22 (MGDLWVLLFSSLSLAAFHGVRG) is a signal peptide. The Extracellular segment spans residues 23–176 (CLECDPKFTE…EDPKTAENRE (154 aa)). N-linked (GlcNAc...) asparagine glycosylation is found at Asn98 and Asn128. The chain crosses the membrane as a helical span at residues 177–197 (ISLYLIFIAEAVILASAVLLF). The Cytoplasmic portion of the chain corresponds to 198 to 263 (HVCISHRRKM…CAESEMQTGT (66 aa)). Residues 241 to 263 (GRSNSNSLTGEPTCAESEMQTGT) are disordered.

This sequence belongs to the Izumo family. As to quaternary structure, monomer and homodimer. As to expression, sperm-specific (at protein level).

It is found in the cell membrane. Its subcellular location is the cytoplasmic vesicle. The protein resides in the secretory vesicle. It localises to the acrosome inner membrane. Plays an important role in the biogenesis of the acrosome during sperm development. The sequence is that of Izumo sperm-egg fusion protein 3 (Izumo3) from Mus musculus (Mouse).